The following is a 45-amino-acid chain: Sperm-specific protein Phi-3 (45 aa).

The segment at A1 to K45 is disordered.

It localises to the nucleus. The protein resides in the chromosome. Functionally, involved in nuclear basic protein transition: histones are replaced by spermatid specific proteins which are themselves replaced by protamines in late spermatids. In Mytilus californianus (California mussel), this protein is Sperm-specific protein Phi-3.